Here is a 188-residue protein sequence, read N- to C-terminus: Adenine phosphoribosyltransferase (188 aa).

It belongs to the purine/pyrimidine phosphoribosyltransferase family. In terms of assembly, homodimer.

The protein resides in the cytoplasm. The enzyme catalyses AMP + diphosphate = 5-phospho-alpha-D-ribose 1-diphosphate + adenine. Its pathway is purine metabolism; AMP biosynthesis via salvage pathway; AMP from adenine: step 1/1. Catalyzes a salvage reaction resulting in the formation of AMP, that is energically less costly than de novo synthesis. The polypeptide is Adenine phosphoribosyltransferase (Neisseria meningitidis serogroup C (strain 053442)).